The chain runs to 158 residues: NAD(P)H-quinone oxidoreductase subunit N (158 aa).

The protein belongs to the complex I NdhN subunit family. As to quaternary structure, NDH-1 can be composed of about 15 different subunits; different subcomplexes with different compositions have been identified which probably have different functions.

The protein resides in the cellular thylakoid membrane. The enzyme catalyses a plastoquinone + NADH + (n+1) H(+)(in) = a plastoquinol + NAD(+) + n H(+)(out). It catalyses the reaction a plastoquinone + NADPH + (n+1) H(+)(in) = a plastoquinol + NADP(+) + n H(+)(out). Functionally, NDH-1 shuttles electrons from an unknown electron donor, via FMN and iron-sulfur (Fe-S) centers, to quinones in the respiratory and/or the photosynthetic chain. The immediate electron acceptor for the enzyme in this species is believed to be plastoquinone. Couples the redox reaction to proton translocation, and thus conserves the redox energy in a proton gradient. Cyanobacterial NDH-1 also plays a role in inorganic carbon-concentration. The sequence is that of NAD(P)H-quinone oxidoreductase subunit N from Cyanothece sp. (strain PCC 7425 / ATCC 29141).